The primary structure comprises 611 residues: UvrABC system protein C (611 aa).

A GIY-YIG domain is found at 14–91; that stretch reads TSPGCYIHKD…IKENQPKYNI (78 aa). The UVR domain maps to 196-231; it reads DQIIEDLRGKMAGAAQAMEFEKAAEYRDLIQSIGTL. Residues 587-611 are disordered; the sequence is KLNPKTQEQEQAQLREVAEPQIGLE.

The protein belongs to the UvrC family. In terms of assembly, interacts with UvrB in an incision complex.

The protein localises to the cytoplasm. Its function is as follows. The UvrABC repair system catalyzes the recognition and processing of DNA lesions. UvrC both incises the 5' and 3' sides of the lesion. The N-terminal half is responsible for the 3' incision and the C-terminal half is responsible for the 5' incision. This chain is UvrABC system protein C, found in Streptococcus sanguinis (strain SK36).